Here is a 179-residue protein sequence, read N- to C-terminus: Probable F-box protein At3g25550 (179 aa).

The 37-residue stretch at 19–55 (IPNDDVLEEIIVRLPVKTLTRFQTVSKHWRHTIKSRN) folds into the F-box domain.

The chain is Probable F-box protein At3g25550 from Arabidopsis thaliana (Mouse-ear cress).